The chain runs to 1142 residues: Potassium channel subfamily T member 2 (1142 aa).

The Cytoplasmic segment spans residues 1-63 (MVDLESEVPP…KNQRSSLRIR (63 aa)). A helical transmembrane segment spans residues 64–84 (LFNFSLKLLSCLLYIIRVLLE). Topologically, residues 85–101 (KPSQGNDWSHIFWVNRS) are extracellular. An N-linked (GlcNAc...) asparagine glycan is attached at N99. The chain crosses the membrane as a helical span at residues 102–122 (LPLWGLQVSVALISLFETILL). Over 123–137 (GYLSYKGNIWEQILR) the chain is Cytoplasmic. The chain crosses the membrane as a helical span at residues 138–158 (VPFILEIINAVPFIISIFWPT). The Extracellular portion of the chain corresponds to 159-160 (LR). Residues 161–173 (NLFVPVFLNCWLA) form a helical membrane-spanning segment. Topologically, residues 174–198 (KHALENMINDLHRAIQRTQSAMFNQ) are cytoplasmic. The chain crosses the membrane as a helical span at residues 199–219 (VLILISTLLCLIFTCICGIQH). The Extracellular segment spans residues 220–228 (LERIGKKLN). The segment at residues 229–249 (LFDSLYFCIVTFSTVGFGDVT) is an intramembrane region (pore-forming). Residues 250–256 (PETWSSK) are Extracellular-facing. A helical membrane pass occupies residues 257–277 (LFVVAMICVALVVLPIQFEQL). Residues 278 to 1142 (AYLWMERQKS…VQDSREETQL (865 aa)) lie on the Cytoplasmic side of the membrane. RCK N-terminal domains follow at residues 299–435 (EKHV…DHVV) and 725–865 (NKLI…CYSL). Disordered stretches follow at residues 989–1044 (DTKD…EKIT) and 1118–1142 (PNSE…ETQL). Residues 1017–1037 (LRRKSMQWARRLSRKGPKHSG) show a composition bias toward basic residues. A compositionally biased stretch (polar residues) spans 1118-1129 (PNSEPSRKNSIC).

This sequence belongs to the potassium channel family. Calcium-activated (TC 1.A.1.3) subfamily. KCa4.2/KCNT2 sub-subfamily. As to quaternary structure, homotetramer. Forms heteromer with KCNT1; heteromeric channels differ from those of homomeric channels in their unitary conductance, kinetic behavior, subcellular localization, and response to activation of protein kinase C. Post-translationally, phosphorylated by protein kinase C. Phosphorylation of the C-terminal domain inhibits channel activity. In terms of tissue distribution, detected in brain, and at low levels in heart. Detected in brainstem, including auditory neurons such as the medial nucleus of the trapezoid body. Detected in the olfactory bulb, red nucleus, facial nucleus, pontine nucleus, oculomotor nucleus, substantia nigra, deep cerebellar nuclei, vestibular nucleus, and the thalamus. Detected in hippocampal CA1, CA2, and CA3 regions, the dentate gyrus, supraoptic nucleus, hypothalamus, dorsal root ganglion, and cortical layers II, III, and V. Detected in striatum cholinergic interneurons.

The protein localises to the cell membrane. The enzyme catalyses K(+)(in) = K(+)(out). Its activity is regulated as follows. Are normally in a closed state unless activated by an increase in intracellular Na(+) and Cl(-). Inhibited upon stimulation of G-protein coupled receptors, such as CHRM1 and GRM1. There is conflicting data about the effect of ATP on KNCT2 channels activity. Intracellular ATP was initially report to inhibit the channel activity. However, others studies conclude that KNCT2 channels are not inhibited by intracellular ATP. Its function is as follows. Sodium-activated and chloride-activated potassium channel. Produces rapidly activating outward rectifier K(+) currents. Contributes to regulate neuronal excitability. The protein is Potassium channel subfamily T member 2 (Kcnt2) of Rattus norvegicus (Rat).